The sequence spans 839 residues: Transient receptor potential cation channel subfamily V member 1 (839 aa).

The segment at 1-60 (MEKWASLDSDESEPPAQENSCPDPPDRDPNSKPPPAKPHIFATRSRTRLFGKGDSEEASP) is disordered. Residues 1–433 (MEKWASLDSD…QDKWDRFVKR (433 aa)) are Cytoplasmic-facing. One copy of the ANK 1 repeat lies at 111–139 (RLYDRRSIFDAVAQSNCQELESLLSFLQK). Position 116 (R116) interacts with ATP. At S117 the chain carries Phosphoserine; by PKA and PKD. T145 bears the Phosphothreonine; by PKA; in vitro mark. The ANK 2 repeat unit spans residues 154–186 (TGKTCLLKAMLNLHNGQNDTIALLLDIARKTDS). Residues K156, K161, N165, 200–203 (YKGQ), and 211–212 (ER) contribute to the ATP site. 4 ANK repeats span residues 204-229 (TALH…ADVQ), 250-277 (ELPL…QPAD), 286-322 (NTVL…KLHP), and 336-359 (TPLA…REIH). T371 is modified (phosphothreonine; by PKA; in vitro). The ANK 7 repeat unit spans residues 394 to 416 (NSVLEVIAYSSSETPNRHDMLLV). Residues 434 to 455 (IFYFNFFVYCLYMIIFTTAAYY) traverse the membrane as a helical segment. The Extracellular segment spans residues 456–472 (RPVEGLPPYKLNNTVGD). The chain crosses the membrane as a helical span at residues 473–497 (YFRVTGEILSVSGGVYFFFRGIQYF). The Cytoplasmic segment spans residues 498–510 (LQRRPSLKSLFVD). S503 carries the post-translational modification Phosphoserine; by PKC/PRKCE. A helical membrane pass occupies residues 511 to 532 (SYSEILFFVQSLFMLVSVVLYF). Position 512 to 513 (512 to 513 (YS)) interacts with resiniferatoxin. Topologically, residues 533–535 (SHR) are extracellular. The chain crosses the membrane as a helical span at residues 536–556 (KEYVASMVFSLAMGWTNMLYY). 2 residues coordinate resiniferatoxin: T551 and R558. The Cytoplasmic segment spans residues 557–559 (TRG). The chain crosses the membrane as a helical span at residues 560–598 (FQQMGIYAVMIEKMILRDLCRFMFVYLVFLFGFSTAVVT). At 599 to 630 (LIEDGKNNSLPVESPPHKCRGSACRPGNSYNS) the chain is on the extracellular side. N605 is a glycosylation site (N-linked (GlcNAc...) asparagine). The pore-forming intramembrane region spans 631–652 (LYSTCLELFKFTIGMGDLEFTE). G644 serves as a coordination point for Na(+). The Selectivity filter signature appears at 644 to 647 (GMGD). A Ca(2+)-binding site is contributed by D647. The Extracellular segment spans residues 653–656 (NYDF). A helical membrane pass occupies residues 657–683 (KAVFIILLLAYVILTYILLLNMLIALM). Residues 684–839 (GETVNKIAQE…FKDSMAPGEK (156 aa)) are Cytoplasmic-facing. Residues 685–713 (ETVNKIAQESKNIWKLQRAITILDTEKSF) form an AD region. Phosphothreonine is present on T705. The tract at residues 768 to 802 (EGVKRTLSFSLRSGRVSGRNWKNFALVPLLRDAST) is interaction with calmodulin. S775 is modified (phosphoserine). Residues 778–793 (LRSGRVSGRNWKNFAL) form a required for PIP2-mediated channel inhibition region. S801 carries the post-translational modification Phosphoserine; by PKC/PRKCE and PKC/PRKCZ. Over residues 802–815 (TRDRHSTQPEEVQL) the composition is skewed to basic and acidic residues. Positions 802–839 (TRDRHSTQPEEVQLKHYTGSLKPEDAEVFKDSMAPGEK) are disordered. S821 carries the post-translational modification Phosphoserine. Basic and acidic residues predominate over residues 823–839 (KPEDAEVFKDSMAPGEK).

This sequence belongs to the transient receptor (TC 1.A.4) family. TrpV subfamily. TRPV1 sub-subfamily. As to quaternary structure, homotetramer. May also form a heteromeric channel with TRPV3. Interacts with CALM, PRKCM and CSK. Interacts with PRKCG and NTRK1, probably by forming a trimeric complex. Interacts with PIRT. Interacts with the Scolopendra mutilans RhTx toxin. Interacts with TMEM100. Interacts with PACS2. Post-translationally, phosphorylation by PKA reverses capsaicin-induced dephosphorylation at multiple sites probably including Ser-117 as a major phosphorylation site. Phosphorylation by CAMKII seems to regulate binding to vanilloids. Phosphorylated and modulated by PRKCE, PRKCM and probably PRKCZ. Dephosphorylation by calcineurin seems to lead to receptor desensitization and phosphorylation by CAMKII recovers activity. In terms of tissue distribution, detected in neurons in the root ganglia (at protein level). Detected in dorsal root ganglia.

It is found in the postsynaptic cell membrane. The protein resides in the cell projection. The protein localises to the dendritic spine membrane. Its subcellular location is the cell membrane. The catalysed reaction is Ca(2+)(in) = Ca(2+)(out). The enzyme catalyses Mg(2+)(in) = Mg(2+)(out). It carries out the reaction Na(+)(in) = Na(+)(out). It catalyses the reaction K(+)(in) = K(+)(out). The channel is sensitized by ATP binding. Repeated stimulation with capsaicin gives rise to progressively smaller responses, due to desensitization. This desensitization is triggered by the influx of calcium ions and is inhibited by elevated ATP levels. Ca(2+) and CALM displace ATP from its binding site and trigger a conformation change that leads to a closed, desensitized channel. The double-knot toxin (DkTx) from the Chinese earth tiger tarantula activates the channel and traps it in an open conformation. The Scolopendra mutilans RhTx toxin potentiates the heat activation pathway mediated by this channel by binding to the charge-rich outer pore region (in an activated state). Channel activity is activated via the interaction with PIRT and phosphatidylinositol 4,5-bisphosphate (PIP2). Both PIRT and PIP2 are required to activate channel activity. Intracellular PIP2 inhibits desensitization. In terms of biological role, non-selective calcium permeant cation channel involved in detection of noxious chemical and thermal stimuli. Seems to mediate proton influx and may be involved in intracellular acidosis in nociceptive neurons. Involved in mediation of inflammatory pain and hyperalgesia. Sensitized by a phosphatidylinositol second messenger system activated by receptor tyrosine kinases, which involves PKC isozymes and PCL. Activation by vanilloids, like capsaicin, and temperatures higher than 42 degrees Celsius. Upon activation, exhibits a time- and Ca(2+)-dependent outward rectification, followed by a long-lasting refractory state. Mild extracellular acidic pH (6.5) potentiates channel activation by noxious heat and vanilloids, whereas acidic conditions (pH &lt;6) directly activate the channel. Can be activated by endogenous compounds, including 12-hydroperoxytetraenoic acid and bradykinin. Acts as ionotropic endocannabinoid receptor with central neuromodulatory effects. Triggers a form of long-term depression (TRPV1-LTD) mediated by the endocannabinoid anandamine in the hippocampus and nucleus accumbens by affecting AMPA receptors endocytosis. This chain is Transient receptor potential cation channel subfamily V member 1 (Trpv1), found in Mus musculus (Mouse).